Here is a 261-residue protein sequence, read N- to C-terminus: UPF0246 protein azo1887 (261 aa).

The protein belongs to the UPF0246 family.

In Azoarcus sp. (strain BH72), this protein is UPF0246 protein azo1887.